A 428-amino-acid polypeptide reads, in one-letter code: Adenosylhomocysteinase (428 aa).

Substrate is bound by residues Thr-62, Asp-134, and Glu-159. 160 to 162 lines the NAD(+) pocket; sequence TTT. Substrate is bound by residues Lys-189 and Asp-193. Residues Asn-194, 223–228, Glu-246, Asn-281, 302–304, and Asn-349 each bind NAD(+); these read GYGWCG and SGH.

It belongs to the adenosylhomocysteinase family. The cofactor is NAD(+).

The protein localises to the cytoplasm. The enzyme catalyses S-adenosyl-L-homocysteine + H2O = L-homocysteine + adenosine. It functions in the pathway amino-acid biosynthesis; L-homocysteine biosynthesis; L-homocysteine from S-adenosyl-L-homocysteine: step 1/1. In terms of biological role, may play a key role in the regulation of the intracellular concentration of adenosylhomocysteine. The chain is Adenosylhomocysteinase from Gloeobacter violaceus (strain ATCC 29082 / PCC 7421).